The primary structure comprises 99 residues: Beta-2-microglobulin (99 aa).

Residues proline 5–threonine 92 enclose the Ig-like C1-type domain. A disulfide bridge links cysteine 25 with cysteine 80.

The protein belongs to the beta-2-microglobulin family. Heterodimer of an alpha chain and a beta chain. Beta-2-microglobulin is the beta-chain of major histocompatibility complex class I molecules.

It is found in the secreted. Component of the class I major histocompatibility complex (MHC). Involved in the presentation of peptide antigens to the immune system. This is Beta-2-microglobulin (B2M) from Oryctolagus cuniculus (Rabbit).